The following is a 901-amino-acid chain: Alpha-actinin-3 (901 aa).

Methionine 1 carries the N-acetylmethionine modification. Positions 1–261 (MMMVMQPEGL…IMTYVSCFYH (261 aa)) are actin-binding. 2 consecutive Calponin-homology (CH) domains span residues 45–149 (KQQR…LRFA) and 158–264 (TSAK…HAFA). Spectrin repeat units follow at residues 288-398 (KLME…WLLS), 408-513 (HLAE…ALER), 523-634 (RLQL…TLQE), and 644-747 (RLRR…EVEN). 2 EF-hand domains span residues 760 to 795 (EQLN…MGYD) and 796 to 831 (LGEV…ETAE). 6 residues coordinate Ca(2+): aspartate 773, asparagine 777, methionine 779, aspartate 784, aspartate 809, and asparagine 811.

It belongs to the alpha-actinin family. As to quaternary structure, homodimer; antiparallel. Also forms heterodimers with ACTN2. Interacts with MYOZ1. In terms of tissue distribution, expression restricted to fast (type 2) skeletal muscle fibers (at protein level).

In terms of biological role, F-actin cross-linking protein which is thought to anchor actin to a variety of intracellular structures. This is a bundling protein. The chain is Alpha-actinin-3 (ACTN3) from Homo sapiens (Human).